A 227-amino-acid polypeptide reads, in one-letter code: GTP:AMP phosphotransferase AK3, mitochondrial (227 aa).

GTP contacts are provided by Gly-17, Gly-19, Lys-20, Gly-21, and Thr-22. Lys-20 is subject to N6-succinyllysine. Lys-34 carries the N6-acetyllysine modification. A Phosphoserine modification is found at Ser-37. The interval 37–66 is NMP; it reads SSGDLLRDNMLRGTEIGVLAKAFIDQGKLI. Positions 38 and 43 each coordinate AMP. The residue at position 57 (Lys-57) is an N6-succinyllysine. Lys-64 serves as a coordination point for AMP. N6-acetyllysine; alternate occurs at positions 64 and 80. An N6-succinyllysine; alternate mark is found at Lys-64 and Lys-80. The AMP site is built by Gly-91, Arg-94, and Gln-98. Residues 127–164 are LID; it reads ARWIHPASGRVYNIEFNPPKTVGIDDLTGEPLIQREDD. GTP-binding residues include Arg-128, Tyr-138, Asn-139, Arg-161, and Arg-172. Residues Lys-174 and Lys-189 each carry the N6-acetyllysine; alternate modification. N6-succinyllysine; alternate occurs at positions 174 and 189. Residue Thr-201 coordinates GTP. Lys-203 is subject to N6-acetyllysine.

This sequence belongs to the adenylate kinase family. AK3 subfamily. Monomer. Highly expressed in heart, skeletal muscle and liver, moderately expressed in pancreas and kidney, and weakly expressed in placenta, brain and lung.

It localises to the mitochondrion matrix. The enzyme catalyses a ribonucleoside 5'-triphosphate + AMP = a ribonucleoside 5'-diphosphate + ADP. It carries out the reaction GTP + AMP = GDP + ADP. The catalysed reaction is ITP + AMP = IDP + ADP. Inhibited by ATP. In terms of biological role, mitochondrial adenylate kinase with a specific GTP:AMP phosphotransferase activity. Could also use ITP as phosphate donor. Its physiological function is to recycle GTP into GDP which is necessary for the TCA cycle in the mitochondrial matrix. This is GTP:AMP phosphotransferase AK3, mitochondrial from Homo sapiens (Human).